A 501-amino-acid polypeptide reads, in one-letter code: Raftlin-2 (501 aa).

Disordered stretches follow at residues 1-20 (MGCGLRKLEDPDDSSPGKIF) and 196-239 (SWNE…RKGE). A lipid anchor (N-myristoyl glycine) is attached at G2. C3 is lipidated: S-palmitoyl cysteine. Over residues 220 to 233 (GQYQMEQNGSPTSS) the composition is skewed to polar residues. The residue at position 405 (S405) is a Phosphoserine. The tract at residues 407–449 (AQTPDKKASRHIKGEDKNKATSRSIGLDTTSSQPAESRHLPEE) is disordered. Position 409 is a phosphothreonine (T409). Basic and acidic residues predominate over residues 410–425 (PDKKASRHIKGEDKNK). Positions 427-441 (TSRSIGLDTTSSQPA) are enriched in polar residues. Phosphoserine is present on S430.

This sequence belongs to the raftlin family.

Its subcellular location is the cell membrane. In terms of biological role, upon bacterial lipopolysaccharide stimulation, mediates clathrin-dependent internalization of TLR4 in dendritic cells, resulting in activation of TICAM1-mediated signaling and subsequent IFNB1 production. May regulate B-cell antigen receptor-mediated signaling. This is Raftlin-2 (RFTN2) from Homo sapiens (Human).